The chain runs to 116 residues: Ribosome-binding factor A (116 aa).

Belongs to the RbfA family. As to quaternary structure, monomer. Binds 30S ribosomal subunits, but not 50S ribosomal subunits or 70S ribosomes.

It localises to the cytoplasm. One of several proteins that assist in the late maturation steps of the functional core of the 30S ribosomal subunit. Associates with free 30S ribosomal subunits (but not with 30S subunits that are part of 70S ribosomes or polysomes). Required for efficient processing of 16S rRNA. May interact with the 5'-terminal helix region of 16S rRNA. This is Ribosome-binding factor A from Ureaplasma parvum serovar 3 (strain ATCC 27815 / 27 / NCTC 11736).